Reading from the N-terminus, the 307-residue chain is MENESKYKTIDHVICVEGNKKIHVWETLPEENSPKRKNAIIIASGFARRMDHFAGLAEYLSRNGFHVIRYDSLHHVGLSSGTIDEFTMSIGKQSLLAVVDWLTTRKINNFGMLASSLSARIAYASLSEINASFLITAVGFVNLRYSLERALGFDYLSLPINELPNNLDFEGHKLGAEVFARDCLDFGWEDLASTINNMMYLDIPFIAFTANNDNWVKQDEVITLLSNIRSNRCKIYSLLGSSHDLSENLVVLRNFYQSVTKAAIAMDNDHLDIDVDITEPSFEHLTIATVNERRMRIEIENQAISLS.

Residues serine 116, aspartate 213, and histidine 243 each act as charge relay system in the active site.

The protein belongs to the LuxD family.

It functions in the pathway lipid metabolism; fatty acid reduction for biolumincescence. In terms of biological role, acyl transferase is part of the fatty acid reductase system required for aldehyde biosynthesis; it produces fatty acids for the luminescent reaction. The chain is Acyl transferase from Photorhabdus luminescens (Xenorhabdus luminescens).